A 106-amino-acid chain; its full sequence is Large ribosomal subunit protein bL21 (106 aa).

It belongs to the bacterial ribosomal protein bL21 family. Part of the 50S ribosomal subunit. Contacts protein L20.

In terms of biological role, this protein binds to 23S rRNA in the presence of protein L20. This is Large ribosomal subunit protein bL21 from Streptomyces coelicolor (strain ATCC BAA-471 / A3(2) / M145).